We begin with the raw amino-acid sequence, 509 residues long: Bifunctional purine biosynthesis protein PurH (509 aa).

In terms of domain architecture, MGS-like spans 1 to 144; sequence MKRALISVSD…KNYAAVTVVV (144 aa).

Belongs to the PurH family.

It catalyses the reaction (6R)-10-formyltetrahydrofolate + 5-amino-1-(5-phospho-beta-D-ribosyl)imidazole-4-carboxamide = 5-formamido-1-(5-phospho-D-ribosyl)imidazole-4-carboxamide + (6S)-5,6,7,8-tetrahydrofolate. The catalysed reaction is IMP + H2O = 5-formamido-1-(5-phospho-D-ribosyl)imidazole-4-carboxamide. Its pathway is purine metabolism; IMP biosynthesis via de novo pathway; 5-formamido-1-(5-phospho-D-ribosyl)imidazole-4-carboxamide from 5-amino-1-(5-phospho-D-ribosyl)imidazole-4-carboxamide (10-formyl THF route): step 1/1. It participates in purine metabolism; IMP biosynthesis via de novo pathway; IMP from 5-formamido-1-(5-phospho-D-ribosyl)imidazole-4-carboxamide: step 1/1. The protein is Bifunctional purine biosynthesis protein PurH of Listeria monocytogenes serotype 4a (strain HCC23).